The chain runs to 347 residues: Cytosolic sulfotransferase 14 (347 aa).

Residue 87-92 (KSGTTW) participates in 3'-phosphoadenylyl sulfate binding. The active-site Proton acceptor is His155. 3'-phosphoadenylyl sulfate contacts are provided by residues Arg177, Ser185, Tyr244, and 310 to 312 (RKG).

The protein belongs to the sulfotransferase 1 family.

It is found in the cytoplasm. In terms of biological role, sulfotransferase that utilizes 3'-phospho-5'-adenylyl sulfate (PAPS) as sulfonate donor. Not active with 11-hydroxyjasmonate or 12-hydroxyjasmonate. The sequence is that of Cytosolic sulfotransferase 14 (SOT14) from Arabidopsis thaliana (Mouse-ear cress).